Reading from the N-terminus, the 78-residue chain is Protein Vpr (78 aa).

The homooligomerization stretch occupies residues 1 to 42; sequence MEQAPEDQGPQREPHNEWTLELLEELKNEAVRHFPRIWLHGL.

It belongs to the HIV-1 VPR protein family. In terms of assembly, homooligomer, may form homodimer. Interacts with p6-gag region of the Pr55 Gag precursor protein through a (Leu-X-X)4 motif near the C-terminus of the P6gag protein. Interacts with host UNG. May interact with host RAD23A/HHR23A. Interacts with host VPRBP/DCAF1, leading to hijack the CUL4A-RBX1-DDB1-DCAF1/VPRBP complex, mediating ubiquitination of host proteins such as TERT and ZGPAT and arrest of the cell cycle in G2 phase. In terms of processing, phosphorylated on several residues by host. These phosphorylations regulate VPR activity for the nuclear import of the HIV-1 pre-integration complex.

The protein resides in the virion. Its subcellular location is the host nucleus. It is found in the host extracellular space. Its function is as follows. During virus replication, may deplete host UNG protein, and incude G2-M cell cycle arrest. Acts by targeting specific host proteins for degradation by the 26S proteasome, through association with the cellular CUL4A-DDB1 E3 ligase complex by direct interaction with host VPRPB/DCAF-1. Cell cycle arrest reportedly occurs within hours of infection and is not blocked by antiviral agents, suggesting that it is initiated by the VPR carried into the virion. Additionally, VPR induces apoptosis in a cell cycle dependent manner suggesting that these two effects are mechanistically linked. Detected in the serum and cerebrospinal fluid of AIDS patient, VPR may also induce cell death to bystander cells. In terms of biological role, during virus entry, plays a role in the transport of the viral pre-integration (PIC) complex to the host nucleus. This function is crucial for viral infection of non-dividing macrophages. May act directly at the nuclear pore complex, by binding nucleoporins phenylalanine-glycine (FG)-repeat regions. This is Protein Vpr from Human immunodeficiency virus type 1 group M subtype B (isolate PCV12) (HIV-1).